Here is a 402-residue protein sequence, read N- to C-terminus: Zinc finger CCHC domain-containing protein 12 (402 aa).

A compositionally biased stretch (acidic residues) spans 268 to 277; sequence DTPDDSDEDV. The tract at residues 268–342 is disordered; the sequence is DTPDDSDEDV…PGNMRRTRKR (75 aa). The span at 311–323 shows a compositional bias: polar residues; the sequence is SPNNSQFPSPCTS. The segment at 346–363 adopts a CCHC-type zinc-finger fold; it reads IRCSYCGEEGHSKETCDN. Basic and acidic residues predominate over residues 383-392; it reads HTEERSREAP. The tract at residues 383–402 is disordered; the sequence is HTEERSREAPVEPSDPCELQ.

This sequence belongs to the ZCCHC12 family. In terms of assembly, interacts with SMAD1 and CREB-binding protein (CBP). Forms a protein-DNA complex through its association with SMAD1.

Transcriptional coactivator in the bone morphogenetic protein (BMP)-signaling pathway. It positively modulates BMP signaling by interacting with SMAD1 and associating with CBP in the transcription complex. It contributes to the BMP-induced enhancement of cholinergic-neuron-specific gene expression. The chain is Zinc finger CCHC domain-containing protein 12 (ZCCHC12) from Bos taurus (Bovine).